Here is a 134-residue protein sequence, read N- to C-terminus: Two-component response regulator ORR5 (134 aa).

The region spanning 16-133 is the Response regulatory domain; it reads HVLAVDDSSV…DVSRLCSRVL (118 aa). Position 66 is a 4-aspartylphosphate (aspartate 66).

It belongs to the ARR family. Type-A subfamily. In terms of processing, two-component system major event consists of a His-to-Asp phosphorelay between a sensor histidine kinase (HK) and a response regulator (RR). In plants, the His-to-Asp phosphorelay involves an additional intermediate named Histidine-containing phosphotransfer protein (HPt). This multistep phosphorelay consists of a His-Asp-His-Asp sequential transfer of a phosphate group between first a His and an Asp of the HK protein, followed by the transfer to a conserved His of the HPt protein and finally the transfer to an Asp in the receiver domain of the RR protein. As to expression, expressed in mature leaves and shoots, and at low levels in roots and flowers.

Functions as a response regulator involved in His-to-Asp phosphorelay signal transduction system. Phosphorylation of the Asp residue in the receiver domain activates the ability of the protein to promote the transcription of target genes. Type-A response regulators seem to act as negative regulators of the cytokinin signaling. The polypeptide is Two-component response regulator ORR5 (Oryza sativa subsp. indica (Rice)).